The primary structure comprises 459 residues: Ribulose bisphosphate carboxylase large chain (459 aa).

An N6,N6,N6-trimethyllysine modification is found at Lys-4. Residues Asn-113 and Thr-163 each coordinate substrate. Lys-165 functions as the Proton acceptor in the catalytic mechanism. Position 167 (Lys-167) interacts with substrate. Mg(2+)-binding residues include Lys-191, Asp-193, and Glu-194. Residue Lys-191 is modified to N6-carboxylysine. Residue His-284 is the Proton acceptor of the active site. The substrate site is built by Arg-285, His-317, and Ser-369.

This sequence belongs to the RuBisCO large chain family. Type I subfamily. In terms of assembly, heterohexadecamer of 8 large chains and 8 small chains; disulfide-linked. The disulfide link is formed within the large subunit homodimers. The cofactor is Mg(2+). The disulfide bond which can form in the large chain dimeric partners within the hexadecamer appears to be associated with oxidative stress and protein turnover.

It localises to the plastid. It is found in the chloroplast. The catalysed reaction is 2 (2R)-3-phosphoglycerate + 2 H(+) = D-ribulose 1,5-bisphosphate + CO2 + H2O. The enzyme catalyses D-ribulose 1,5-bisphosphate + O2 = 2-phosphoglycolate + (2R)-3-phosphoglycerate + 2 H(+). In terms of biological role, ruBisCO catalyzes two reactions: the carboxylation of D-ribulose 1,5-bisphosphate, the primary event in carbon dioxide fixation, as well as the oxidative fragmentation of the pentose substrate in the photorespiration process. Both reactions occur simultaneously and in competition at the same active site. The sequence is that of Ribulose bisphosphate carboxylase large chain from Nyssa ogeche (Ogeechee tupelo).